A 943-amino-acid chain; its full sequence is Protein translocase subunit SecA (943 aa).

ATP is bound by residues Gln90, Gly108–Thr112, and Asp509. The segment at Lys534–Pro576 is disordered. Over residues Ala556–Ser570 the composition is skewed to low complexity.

The protein belongs to the SecA family. As to quaternary structure, monomer and homodimer. Part of the essential Sec protein translocation apparatus which comprises SecA, SecYEG and auxiliary proteins SecDF. Other proteins may also be involved.

Its subcellular location is the cell inner membrane. The protein resides in the cellular thylakoid membrane. It is found in the cytoplasm. The catalysed reaction is ATP + H2O + cellular proteinSide 1 = ADP + phosphate + cellular proteinSide 2.. Its function is as follows. Part of the Sec protein translocase complex. Interacts with the SecYEG preprotein conducting channel. Has a central role in coupling the hydrolysis of ATP to the transfer of proteins into and across the cell membrane, serving as an ATP-driven molecular motor driving the stepwise translocation of polypeptide chains across the membrane. Probably participates in protein translocation into and across both the cytoplasmic and thylakoid membranes in cyanobacterial cells. The sequence is that of Protein translocase subunit SecA from Prochlorococcus marinus (strain MIT 9515).